The sequence spans 75 residues: Small ribosomal subunit protein bS18 (75 aa).

This sequence belongs to the bacterial ribosomal protein bS18 family. In terms of assembly, part of the 30S ribosomal subunit. Forms a tight heterodimer with protein bS6.

Its function is as follows. Binds as a heterodimer with protein bS6 to the central domain of the 16S rRNA, where it helps stabilize the platform of the 30S subunit. In Alteromonas mediterranea (strain DSM 17117 / CIP 110805 / LMG 28347 / Deep ecotype), this protein is Small ribosomal subunit protein bS18.